Reading from the N-terminus, the 344-residue chain is Holliday junction branch migration complex subunit RuvB (344 aa).

The large ATPase domain (RuvB-L) stretch occupies residues Met1–Tyr180. 9 residues coordinate ATP: Leu19, Arg20, Gly61, Lys64, Thr65, Thr66, Arg170, Tyr180, and Arg217. Thr65 serves as a coordination point for Mg(2+). The tract at residues Thr181–Asp251 is small ATPAse domain (RuvB-S). A head domain (RuvB-H) region spans residues Glu254–Lys344. Residues Arg290, Arg309, and Arg314 each coordinate DNA.

The protein belongs to the RuvB family. In terms of assembly, homohexamer. Forms an RuvA(8)-RuvB(12)-Holliday junction (HJ) complex. HJ DNA is sandwiched between 2 RuvA tetramers; dsDNA enters through RuvA and exits via RuvB. An RuvB hexamer assembles on each DNA strand where it exits the tetramer. Each RuvB hexamer is contacted by two RuvA subunits (via domain III) on 2 adjacent RuvB subunits; this complex drives branch migration. In the full resolvosome a probable DNA-RuvA(4)-RuvB(12)-RuvC(2) complex forms which resolves the HJ.

It localises to the cytoplasm. It carries out the reaction ATP + H2O = ADP + phosphate + H(+). Its function is as follows. The RuvA-RuvB-RuvC complex processes Holliday junction (HJ) DNA during genetic recombination and DNA repair, while the RuvA-RuvB complex plays an important role in the rescue of blocked DNA replication forks via replication fork reversal (RFR). RuvA specifically binds to HJ cruciform DNA, conferring on it an open structure. The RuvB hexamer acts as an ATP-dependent pump, pulling dsDNA into and through the RuvAB complex. RuvB forms 2 homohexamers on either side of HJ DNA bound by 1 or 2 RuvA tetramers; 4 subunits per hexamer contact DNA at a time. Coordinated motions by a converter formed by DNA-disengaged RuvB subunits stimulates ATP hydrolysis and nucleotide exchange. Immobilization of the converter enables RuvB to convert the ATP-contained energy into a lever motion, pulling 2 nucleotides of DNA out of the RuvA tetramer per ATP hydrolyzed, thus driving DNA branch migration. The RuvB motors rotate together with the DNA substrate, which together with the progressing nucleotide cycle form the mechanistic basis for DNA recombination by continuous HJ branch migration. Branch migration allows RuvC to scan DNA until it finds its consensus sequence, where it cleaves and resolves cruciform DNA. This chain is Holliday junction branch migration complex subunit RuvB, found in Phenylobacterium zucineum (strain HLK1).